Here is a 127-residue protein sequence, read N- to C-terminus: MORF4 family-associated protein 1-like 1 (127 aa).

The stretch at 87–118 forms a coiled coil; the sequence is GEADERVSELCEKAEEKAKEIAKMAEMLVELV.

Belongs to the MORF4 family-associated protein family.

The protein is MORF4 family-associated protein 1-like 1 (MRFAP1L1) of Homo sapiens (Human).